The primary structure comprises 345 residues: uncharacterized protein (345 aa).

The region spanning 1–198 is the CNNM transmembrane domain; the sequence is MDVLSAVLLA…LSEGLLDHEE (198 aa). The next 2 helical transmembrane spans lie at 3 to 23 and 95 to 115; these read VLSAVLLALLLIGANAFFVGA and VPPALLHTLSLAIVVALHVLL. 2 CBS domains span residues 217–280 and 285–342; these read AVPL…PQTV and VVRP…MRDG. The chain crosses the membrane as a helical span at residues 312–332; that stretch reads LALVTADNGSVVGMVALEDVV.

This sequence belongs to the TerC family.

It localises to the cell membrane. This is an uncharacterized protein from Mycobacterium tuberculosis (strain CDC 1551 / Oshkosh).